Reading from the N-terminus, the 238-residue chain is Survival of motor neuron-related-splicing factor 30 (238 aa).

The Tudor domain occupies 72–132 (SWKVGDKCMA…KPVEEGRKAK (61 aa)). The short motif at 142–160 (KKEMIAQQREYKKKKALKK) is the Nuclear localization signal element. Position 201 is a phosphoserine (Ser201). Residue Lys219 is modified to N6-acetyllysine.

This sequence belongs to the SMN family. In terms of assembly, associates with spliceosomes. Associates with U4/U5/U6 tri-snRNP and with U2 snRNP.

The protein localises to the nucleus speckle. It localises to the nucleus. Its subcellular location is the cajal body. In terms of biological role, involved in spliceosome assembly. This Mus musculus (Mouse) protein is Survival of motor neuron-related-splicing factor 30 (Smndc1).